The sequence spans 246 residues: Azurocidin (246 aa).

The N-terminal stretch at 1–19 is a signal peptide; the sequence is MPALRFLALLASLLATSRV. The propeptide occupies 20–26; the sequence is GLATLAD. Residues 27-242 enclose the Peptidase S1 domain; the sequence is IVGGRRAQPQ…FRNWIDSVLN (216 aa). The cysteines at positions 52 and 68 are disulfide-linked. Asn139 and Asn170 each carry an N-linked (GlcNAc...) asparagine glycan. Disulfide bonds link Cys148–Cys205 and Cys178–Cys184. A propeptide spanning residues 245–246 is cleaved from the precursor; that stretch reads PA.

This sequence belongs to the peptidase S1 family. Elastase subfamily.

The protein localises to the cytoplasmic granule membrane. Its function is as follows. This is a neutrophil granule-derived antibacterial and monocyte- and fibroblast-specific chemotactic glycoprotein. Binds heparin. The sequence is that of Azurocidin from Sus scrofa (Pig).